The following is a 34-amino-acid chain: Crassicorin-II (34 aa).

Cysteines 6 and 30 form a disulfide.

In terms of tissue distribution, highly expressed by the mesenteries. Moderately expressed by the pharynx. Weakly expressed by the gonad and pedal disk. No expression in tentacle.

The protein resides in the secreted. It is found in the nematocyst. Its function is as follows. Peptide with both antimicrobial and neurotoxin activities. Cationic AMP with antimicrobial activity against both Gram-positive bacteria (B.subtilis) and Gram-negative bacteria (E.coli and S.enterica). Shows no significant antimicrobial activity against bacteria S.aureus and P.aeruginosa, as well as the fungus C.albicans. In vivo, induces reversible paralytic activity towards the shrimp P.paucidens. May act by impairing sodium or potassium channels in the prey. This is Crassicorin-II from Urticina crassicornis (Mottled anemone).